The sequence spans 544 residues: ATP synthase subunit alpha (544 aa).

173 to 180 is an ATP binding site; the sequence is GDRQTGKT. Residues 513 to 544 form a disordered region; sequence GSDGQIIGGGEPESDGEDVDVEQEQIVRQKRG. The segment covering 524–535 has biased composition (acidic residues); that stretch reads PESDGEDVDVEQ.

This sequence belongs to the ATPase alpha/beta chains family. F-type ATPases have 2 components, CF(1) - the catalytic core - and CF(0) - the membrane proton channel. CF(1) has five subunits: alpha(3), beta(3), gamma(1), delta(1), epsilon(1). CF(0) has three main subunits: a(1), b(2) and c(9-12). The alpha and beta chains form an alternating ring which encloses part of the gamma chain. CF(1) is attached to CF(0) by a central stalk formed by the gamma and epsilon chains, while a peripheral stalk is formed by the delta and b chains.

The protein resides in the cell membrane. It carries out the reaction ATP + H2O + 4 H(+)(in) = ADP + phosphate + 5 H(+)(out). Functionally, produces ATP from ADP in the presence of a proton gradient across the membrane. The alpha chain is a regulatory subunit. In Beutenbergia cavernae (strain ATCC BAA-8 / DSM 12333 / CCUG 43141 / JCM 11478 / NBRC 16432 / NCIMB 13614 / HKI 0122), this protein is ATP synthase subunit alpha.